The chain runs to 152 residues: TEEFRASEKQILDAKQAFCNVDKKKEGTVSCKDLGAIFKSLGLLVKDDKIKDWSDEMDEEATGRLNCDAWIQLFERKLKEDLDERELKEAFRVLDKEKKGVIKVDVLRWILSSLGDELTEEEIENMIAETDTDGSGTVDYEEFKCLMMSSDA.

An N-acetylthreonine modification is found at Thr1. 4 consecutive EF-hand domains span residues 9–44 (KQIL…LGLL), 45–80 (VKDD…KLKE), 82–117 (LDER…LGDE), and 118–152 (LTEE…SSDA). The Ca(2+) site is built by Asp131, Asp133, Ser135, Thr137, and Glu142.

It belongs to the troponin C family.

Troponin is the central regulatory protein of striated muscle contraction. Tn consists of three components: Tn-I which is the inhibitor of actomyosin ATPase, Tn-T which contains the binding site for tropomyosin and Tn-C. The binding of calcium to Tn-C abolishes the inhibitory action of Tn on actin filaments. This Mizuhopecten yessoensis (Japanese scallop) protein is Troponin C.